The sequence spans 394 residues: Elongation factor Tu (394 aa).

The 195-residue stretch at 10 to 204 (KPHINIGTIG…AVDDNIPTPE (195 aa)) folds into the tr-type G domain. Residues 19 to 26 (GHVDHGKT) form a G1 region. GTP is bound at residue 19–26 (GHVDHGKT). T26 is a Mg(2+) binding site. The interval 60–64 (GITIN) is G2. The segment at 81–84 (DCPG) is G3. GTP contacts are provided by residues 81-85 (DCPGH) and 136-139 (NKVD). The G4 stretch occupies residues 136-139 (NKVD). The G5 stretch occupies residues 174-176 (SAL).

This sequence belongs to the TRAFAC class translation factor GTPase superfamily. Classic translation factor GTPase family. EF-Tu/EF-1A subfamily. As to quaternary structure, monomer.

It is found in the cytoplasm. The catalysed reaction is GTP + H2O = GDP + phosphate + H(+). GTP hydrolase that promotes the GTP-dependent binding of aminoacyl-tRNA to the A-site of ribosomes during protein biosynthesis. In Chlamydia pneumoniae (Chlamydophila pneumoniae), this protein is Elongation factor Tu.